The chain runs to 1184 residues: PR domain zinc finger protein 10 (1184 aa).

Positions 122–162 (LDAKEEEEEEEDEDEDTEEEEEEDAEDTDVDDWQPDPPRPF) are disordered. Residues 125-155 (KEEEEEEEDEDEDTEEEEEEDAEDTDVDDWQ) are compositionally biased toward acidic residues. The region spanning 202-320 (LPLVLYIDRF…PKQELKVWYA (119 aa)) is the SET domain. The segment at 221 to 325 (IPKRTQFGPV…KVWYAASYAE (105 aa)) is N-terminal PR domain; essential for transcriptional activator activity. The C2H2-type 1 zinc-finger motif lies at 349 to 371 (WPCYECNRRFISSEQLQQHLNSH). Residue lysine 374 forms a Glycyl lysine isopeptide (Lys-Gly) (interchain with G-Cter in SUMO2) linkage. The span at 381–401 (TRGRGRGRGKRRFGPGRRPGR) shows a compositional bias: basic residues. The tract at residues 381–405 (TRGRGRGRGKRRFGPGRRPGRPPKF) is disordered. Serine 418 carries the phosphoserine modification. Phosphothreonine is present on threonine 422. Residues 444-487 (GLDQPEQASIPIPQLPQETPPSLEQEPETHTLHLQPQQEESLVP) form a disordered region. Polar residues predominate over residues 475–487 (LHLQPQQEESLVP). 8 consecutive C2H2-type zinc fingers follow at residues 520-542 (FKCL…LRFH), 550-572 (LTCD…MKLH), 578-600 (YSCI…VAIH), 606-629 (FTCP…RSFH), 634-656 (YQCT…MLRH), 662-685 (FLCS…QRMH), 717-740 (FKCR…SKRH), and 850-873 (VCCP…RKKH). A C-terminal glutamine-rich region; essential for transcriptional activator activity region spans residues 917-1164 (QAMTELSQTL…TGPSQQQTTQ (248 aa)). The interval 1004 to 1054 (EPAPAAPSASQVAGQPLSPSAQQVQQGLSPSHIQGSSSTQGQALQQQQNSS) is disordered. A compositionally biased stretch (polar residues) spans 1014 to 1036 (QVAGQPLSPSAQQVQQGLSPSHI). Low complexity predominate over residues 1037–1054 (QGSSSTQGQALQQQQNSS).

The protein belongs to the class V-like SAM-binding methyltransferase superfamily. Present in brain, liver, kidney, spleen and thymus (at protein level).

The protein localises to the nucleus. Its function is as follows. Transcriptional activator, essential for early embryonic development and survival of embryonic stem cells (ESCs). Supports cell growth and survival during early development by transcriptionally activating the expression of the translation initiation factor EIF3B, to sustain global translation. Activates the transcription of FLNC. In Mus musculus (Mouse), this protein is PR domain zinc finger protein 10 (Prdm10).